The primary structure comprises 214 residues: Adenylate kinase (214 aa).

Position 10-15 (10-15) interacts with ATP; the sequence is GAGKGT. The NMP stretch occupies residues 30 to 59; it reads STGDMLRAAVKAGTPLGLEAKKVMDAGQLV. AMP contacts are provided by residues Thr-31, Arg-36, 57-59, 85-88, and Gln-92; these read QLV and GFPR. The segment at 122–159 is LID; the sequence is GRRVHPGSGRVYHVVFNPPKVEGKDDVTGEDLAIRPDD. ATP contacts are provided by residues Arg-123 and 132-133; that span reads VY. Residues Arg-156 and Arg-167 each coordinate AMP. Gln-200 is an ATP binding site.

The protein belongs to the adenylate kinase family. In terms of assembly, monomer.

Its subcellular location is the cytoplasm. It catalyses the reaction AMP + ATP = 2 ADP. It functions in the pathway purine metabolism; AMP biosynthesis via salvage pathway; AMP from ADP: step 1/1. In terms of biological role, catalyzes the reversible transfer of the terminal phosphate group between ATP and AMP. Plays an important role in cellular energy homeostasis and in adenine nucleotide metabolism. The polypeptide is Adenylate kinase (Shewanella baltica (strain OS155 / ATCC BAA-1091)).